We begin with the raw amino-acid sequence, 540 residues long: Probable pectinesterase/pectinesterase inhibitor 60 (540 aa).

An N-terminal signal peptide occupies residues 1-31 (MNIMMVQNISFLSLHLLLILLLCLRPLTTVA). A pectinesterase inhibitor 60 region spans residues 32 to 185 (DGNSTNIDGW…SHLISNCLAV (154 aa)). 6 N-linked (GlcNAc...) asparagine glycosylation sites follow: asparagine 34, asparagine 91, asparagine 95, asparagine 120, asparagine 161, and asparagine 195. Residues 225–526 (NLVVAKDGSG…FSVGKFIAGT (302 aa)) form a pectinesterase 60 region. Substrate-binding residues include threonine 302 and glutamine 332. Aspartate 355 functions as the Proton donor; for pectinesterase activity in the catalytic mechanism. Cysteine 369 and cysteine 389 form a disulfide bridge. The active-site Nucleophile; for pectinesterase activity is aspartate 376. Arginine 444 and tryptophan 446 together coordinate substrate.

In the N-terminal section; belongs to the PMEI family. This sequence in the C-terminal section; belongs to the pectinesterase family. Expressed in siliques.

The protein resides in the secreted. It localises to the cell wall. It catalyses the reaction [(1-&gt;4)-alpha-D-galacturonosyl methyl ester](n) + n H2O = [(1-&gt;4)-alpha-D-galacturonosyl](n) + n methanol + n H(+). Its pathway is glycan metabolism; pectin degradation; 2-dehydro-3-deoxy-D-gluconate from pectin: step 1/5. In terms of biological role, acts in the modification of cell walls via demethylesterification of cell wall pectin. The sequence is that of Probable pectinesterase/pectinesterase inhibitor 60 (PME60) from Arabidopsis thaliana (Mouse-ear cress).